The following is a 481-amino-acid chain: Cysteine--tRNA ligase (481 aa).

Cys-43 contributes to the Zn(2+) binding site. Positions 45–55 (ATVQGLPHIGH) match the 'HIGH' region motif. Cys-221, His-246, and Glu-250 together coordinate Zn(2+). The 'KMSKS' region motif lies at 277–281 (KMSKS). Position 280 (Lys-280) interacts with ATP.

It belongs to the class-I aminoacyl-tRNA synthetase family. In terms of assembly, monomer. Zn(2+) serves as cofactor.

The protein resides in the cytoplasm. It carries out the reaction tRNA(Cys) + L-cysteine + ATP = L-cysteinyl-tRNA(Cys) + AMP + diphosphate. In Mycobacterium sp. (strain JLS), this protein is Cysteine--tRNA ligase.